Reading from the N-terminus, the 72-residue chain is Rubredoxin (72 aa).

The Rubredoxin-like domain maps to 19 to 72 (DAVLECKICWQRYDPAEGDPVWQIPPGTPFAALPAHWRCPRCDGDREQFMVVDG). 4 residues coordinate Fe cation: C24, C27, C57, and C60.

The protein belongs to the rubredoxin family. It depends on Fe(3+) as a cofactor.

Its function is as follows. Rubredoxin is a small nonheme, iron protein lacking acid-labile sulfide. Its single Fe, chelated to 4 Cys, functions as an electron acceptor and may also stabilize the conformation of the molecule. Could be involved in hydrogenase-linked redox processes. The polypeptide is Rubredoxin (hoxR) (Azotobacter vinelandii).